Reading from the N-terminus, the 328-residue chain is uncharacterized protein (328 aa).

The protein to the C-terminal of para-aminobenzoate synthase component I.

This is an uncharacterized protein from Haemophilus influenzae (strain ATCC 51907 / DSM 11121 / KW20 / Rd).